A 108-amino-acid chain; its full sequence is Tubulin-specific chaperone A (108 aa).

Ala2 is modified (N-acetylalanine).

It belongs to the TBCA family. Supercomplex made of cofactors A to E. Cofactors A and D function by capturing and stabilizing tubulin in a quasi-native conformation. Cofactor E binds to the cofactor D-tubulin complex; interaction with cofactor C then causes the release of tubulin polypeptides that are committed to the native state. As to expression, widely expressed, but is most abundant in the testis.

It localises to the cytoplasm. The protein localises to the cytoskeleton. Tubulin-folding protein; involved in the early step of the tubulin folding pathway. The sequence is that of Tubulin-specific chaperone A (TBCA) from Bos taurus (Bovine).